Here is an 868-residue protein sequence, read N- to C-terminus: Dolichyl-phosphooligosaccharide-protein glycotransferase 3 (868 aa).

Topologically, residues 1 to 16 (MQNAESWFKKYWHLSV) are cytoplasmic. The chain crosses the membrane as a helical span at residues 17-36 (LVIAALISVKLRILNPWNSV). Topologically, residues 37–101 (FTWTVRLGGN…IAGIIFSATS (65 aa)) are extracellular. The DXD motif 1 motif lies at 45-47 (GND). Mn(2+) is bound at residue Asp-47. His-81 lines the a glycophospholipid pocket. Residues 102-131 (GESLRAVLAFIPAIGGVLAILPVYLLTREV) traverse the membrane as a helical segment. The Cytoplasmic segment spans residues 132 to 133 (FD). A helical transmembrane segment spans residues 134–153 (KRAAVIAAFLIAIVPGQFLQ). Topologically, residues 154–162 (RSILGFNDH) are extracellular. Asp-161 contacts Mn(2+). Residues 161–163 (DHH) carry the DXD motif 2 motif. His-162 lines the a glycophospholipid pocket. His-163 lines the Mn(2+) pocket. A helical transmembrane segment spans residues 163 to 184 (HIWEAFWQVSALGTFLLAYNRW). The Cytoplasmic segment spans residues 185–199 (KGHDLSHNLTARQMA). A helical membrane pass occupies residues 200–212 (YPVIAGITIGLYV). The Extracellular portion of the chain corresponds to 213–215 (LSW). The chain crosses the membrane as a helical span at residues 216 to 238 (GAGFIIAPIILAFMFFAFVLAGF). Topologically, residues 239–241 (VNA) are cytoplasmic. A helical transmembrane segment spans residues 242–262 (DRKNLSLVAVVTFAVSALIYL). Over 263-279 (PFAFNYPGFSTIFYSPF) the chain is Extracellular. The helical transmembrane segment at 280-303 (QLLVLLGSAVIAAAFYQIEKWNDV) threads the bilayer. Residues 304–312 (GFFERVGLG) lie on the Cytoplasmic side of the membrane. A helical transmembrane segment spans residues 313–330 (RKGMPLAVIVLTALIMGL). Topologically, residues 331–373 (FFVISPDFARNLLSVVRVVQPKGGALTIAEVYPFFFTHNGEFT) are extracellular. The TIXE motif signature appears at 357–360 (TIAE). Residues 374–396 (LTNAVLHFGALFFFGMAGILYSA) form a helical membrane-spanning segment. The Cytoplasmic portion of the chain corresponds to 397 to 404 (YRFLKRRS). Residues 405–423 (FPEMALLIWAIAMFIALWG) traverse the membrane as a helical segment. Over 424-427 (QNRF) the chain is Extracellular. Arg-426 is an a glycophospholipid binding site. The helical transmembrane segment at 428-452 (AYYFAAVSAVYSALALSVVFDKLHL) threads the bilayer. Residues 453-468 (YRALENAIGARNKLSY) lie on the Cytoplasmic side of the membrane. The helical transmembrane segment at 469–494 (FRVAFALLIALAAIYPTYILADAQSS) threads the bilayer. Residues 495-868 (YAGGPNKQWY…QNGEIIQLDL (374 aa)) lie on the Extracellular side of the membrane. The tract at residues 550-552 (WWD) is interacts with target acceptor peptide in protein substrate. The WWDYG motif motif lies at 550 to 554 (WWDYG). Positions 613–622 (EMETGKYYAM) match the DKi motif motif.

The protein belongs to the STT3 family. Mg(2+) is required as a cofactor. Mn(2+) serves as cofactor. Requires Zn(2+) as cofactor.

It is found in the cell membrane. It catalyses the reaction an archaeal dolichyl phosphooligosaccharide + [protein]-L-asparagine = an archaeal dolichyl phosphate + a glycoprotein with the oligosaccharide chain attached by N-beta-D-glycosyl linkage to a protein L-asparagine.. It functions in the pathway protein modification; protein glycosylation. Functionally, oligosaccharyl transferase (OST) that catalyzes the initial transfer of a defined glycan (a glucose-linked heptasaccharide composed of 3 Glc, 2 Man, 2 Gal and a sulfate for A.fulgidus AglB-L) from the lipid carrier dolichol-monophosphate to an asparagine residue within an Asn-X-Ser/Thr consensus motif in nascent polypeptide chains, the first step in protein N-glycosylation. The chain is Dolichyl-phosphooligosaccharide-protein glycotransferase 3 (aglB3) from Archaeoglobus fulgidus (strain ATCC 49558 / DSM 4304 / JCM 9628 / NBRC 100126 / VC-16).